Consider the following 221-residue polypeptide: uncharacterized protein (221 aa).

The tract at residues 1 to 30 (MVPPNPAHQPARRTQPQLQPQSQPRAQPLP) is disordered. Over residues 12 to 25 (RRTQPQLQPQSQPR) the composition is skewed to polar residues. Residues 37 to 57 (VLCIIVALVLLGLLVGLAILI) form a helical membrane-spanning segment.

The protein resides in the membrane. This is an uncharacterized protein from Arabidopsis thaliana (Mouse-ear cress).